The sequence spans 295 residues: MYTGRFAPSPTGLLHIGSLLTAVASYADARAHGGKWLIRMEDLDPPREMPGAASHILHTLEAFGFEWDGEVAYQSRRYALYEETLCRLKTAGLVYPCHCSRKDWQAGARRGADGFVYNGRCRHPGQRPALQGKQPAWRIRVPDRIIGFSDGIVGGYAQNLARDIGDFVLLRADGYWAYQLAVVADDAEQGVTHIVRGQDLLVSTPRQIYLQQCLDVPTPQYAHLPLLTNAQGQKWSKQTLAPALDLNRREQLLRQVFRYLKLPEAPETDRPAELLDWAVAHWDMDKVPKHAVTAP.

L-glutamate contacts are provided by residues R5–S9 and E41. The 'HIGH' region signature appears at P8–S18. Zn(2+)-binding residues include C97, C99, Y117, and C121. Residues Y178 and R196 each contribute to the L-glutamate site. The 'KMSKS' region motif lies at K234–Q238. Residue K237 coordinates ATP.

It belongs to the class-I aminoacyl-tRNA synthetase family. GluQ subfamily. Requires Zn(2+) as cofactor.

Functionally, catalyzes the tRNA-independent activation of glutamate in presence of ATP and the subsequent transfer of glutamate onto a tRNA(Asp). Glutamate is transferred on the 2-amino-5-(4,5-dihydroxy-2-cyclopenten-1-yl) moiety of the queuosine in the wobble position of the QUC anticodon. The protein is Glutamyl-Q tRNA(Asp) synthetase of Neisseria meningitidis serogroup B (strain ATCC BAA-335 / MC58).